The chain runs to 715 residues: Protein psiH (715 aa).

The signal sequence occupies residues 1–20 (MNYLKPTIFLILCLVTFVYS). Topologically, residues 21–651 (QPSTLTIQGT…ICKTGAVVST (631 aa)) are extracellular. Residues 115–256 (NYDSKKQVYV…YDYCGVCSGD (142 aa)) form the PA14 domain. N-linked (GlcNAc...) asparagine glycosylation is found at N149, N377, N528, and N622. Residues 652–672 (AVIAGVTVAGAVALGVFIYGG) form a helical membrane-spanning segment. Residues 673–715 (KRGYDYWKESRNVQFSGSNSNPLYEQNPNGSGVNPLYNDNSAL) are Cytoplasmic-facing. A disordered region spans residues 690–715 (SNSNPLYEQNPNGSGVNPLYNDNSAL).

Belongs to the prespore-cell-inducing factor family.

Its subcellular location is the membrane. The chain is Protein psiH (psiH) from Dictyostelium discoideum (Social amoeba).